Reading from the N-terminus, the 245-residue chain is 8-amino-3,8-dideoxy-manno-octulosonate cytidylyltransferase (245 aa).

Belongs to the KdsB family.

It is found in the cytoplasm. It catalyses the reaction 8-amino-3,8-dideoxy-alpha-D-manno-octulosonate + CTP = CMP-8-amino-3,8-dideoxy-alpha-D-manno-oct-2-ulosonate + diphosphate. Its pathway is bacterial outer membrane biogenesis; lipopolysaccharide biosynthesis. In terms of biological role, activates KDO8N (a required 8-carbon sugar) for incorporation into bacterial lipopolysaccharide in the Shewanella genus. The polypeptide is 8-amino-3,8-dideoxy-manno-octulosonate cytidylyltransferase (Shewanella baltica (strain OS195)).